Here is a 162-residue protein sequence, read N- to C-terminus: Large ribosomal subunit protein uL10 (162 aa).

It belongs to the universal ribosomal protein uL10 family. Part of the ribosomal stalk of the 50S ribosomal subunit. The N-terminus interacts with L11 and the large rRNA to form the base of the stalk. The C-terminus forms an elongated spine to which L12 dimers bind in a sequential fashion forming a multimeric L10(L12)X complex.

Forms part of the ribosomal stalk, playing a central role in the interaction of the ribosome with GTP-bound translation factors. The sequence is that of Large ribosomal subunit protein uL10 from Aliarcobacter butzleri (strain RM4018) (Arcobacter butzleri).